Here is a 339-residue protein sequence, read N- to C-terminus: Serpentine receptor class delta-19 (339 aa).

7 helical membrane-spanning segments follow: residues 2–22 (IIFF…LNLL), 39–59 (ATLI…DLFI), 90–110 (VGLS…LISF), 130–150 (ITIM…TLFV), 187–207 (VYAV…IFVL), 242–262 (IIPM…SGLL), and 270–290 (SIFS…LYFV).

Belongs to the nematode receptor-like protein srd family.

Its subcellular location is the membrane. The chain is Serpentine receptor class delta-19 (srd-19) from Caenorhabditis elegans.